A 142-amino-acid chain; its full sequence is Cytochrome c-type biogenesis protein CcmE (142 aa).

At 1–2 (MK) the chain is on the cytoplasmic side. Residues 3 to 23 (GKYLLGILVILGALGYMVFGG) form a helical; Signal-anchor for type II membrane protein membrane-spanning segment. Residues 24 to 142 (LGRNLVYFLT…EVRKLIEEAQ (119 aa)) lie on the Periplasmic side of the membrane. Heme is bound by residues His118 and Tyr122.

Belongs to the CcmE/CycJ family.

The protein localises to the cell inner membrane. Its function is as follows. Heme chaperone required for the biogenesis of c-type cytochromes. Transiently binds heme delivered by CcmC and transfers the heme to apo-cytochromes in a process facilitated by CcmF and CcmH. This is Cytochrome c-type biogenesis protein CcmE from Thermus thermophilus (strain ATCC 27634 / DSM 579 / HB8).